A 215-amino-acid polypeptide reads, in one-letter code: Chaperone protein TorD (215 aa).

Belongs to the TorD/DmsD family. TorD subfamily.

The protein localises to the cytoplasm. Functionally, involved in the biogenesis of TorA. Acts on TorA before the insertion of the molybdenum cofactor and, as a result, probably favors a conformation of the apoenzyme that is competent for acquiring the cofactor. The sequence is that of Chaperone protein TorD from Vibrio atlanticus (strain LGP32) (Vibrio splendidus (strain Mel32)).